A 316-amino-acid chain; its full sequence is Pantothenate kinase (316 aa).

Residue 95 to 102 (GSVAVGKS) participates in ATP binding.

The protein belongs to the prokaryotic pantothenate kinase family.

It is found in the cytoplasm. It catalyses the reaction (R)-pantothenate + ATP = (R)-4'-phosphopantothenate + ADP + H(+). The protein operates within cofactor biosynthesis; coenzyme A biosynthesis; CoA from (R)-pantothenate: step 1/5. The polypeptide is Pantothenate kinase (Shewanella sp. (strain ANA-3)).